A 404-amino-acid chain; its full sequence is Probable cysteine protease atg4 (404 aa).

C133 functions as the Nucleophile in the catalytic mechanism. Catalysis depends on residues D307 and H309.

This sequence belongs to the peptidase C54 family.

The protein resides in the cytoplasm. It localises to the nucleus. The protein localises to the preautophagosomal structure. The catalysed reaction is [protein]-C-terminal L-amino acid-glycyl-phosphatidylethanolamide + H2O = [protein]-C-terminal L-amino acid-glycine + a 1,2-diacyl-sn-glycero-3-phosphoethanolamine. In terms of biological role, cysteine protease that plays a key role in cytoplasm to vacuole transport (Cvt) and autophagy by mediating both proteolytic activation and delipidation of ATG8. Required for selective autophagic degradation of the nucleus (nucleophagy) as well as for mitophagy which contributes to regulate mitochondrial quantity and quality by eliminating the mitochondria to a basal level to fulfill cellular energy requirements and preventing excess ROS production. The protease activity is required for proteolytic activation of ATG8: cleaves the C-terminal amino acid of ATG8 to reveal a C-terminal glycine. ATG8 ubiquitin-like activity requires the exposure of the glycine at the C-terminus for its conjugation to phosphatidylethanolamine (PE) and its insertion to membranes, which is necessary for autophagy. The ATG8-PE conjugate mediates tethering between adjacent membranes and stimulates membrane hemifusion, leading to expansion of the autophagosomal membrane during autophagy. In addition to the protease activity, also catalyzes deconjugation of PE-conjugated forms of ATG8 during macroautophagy: ATG8 delipidation is required to release the protein from membranes, which facilitates multiple events during macroautophagy, and especially for efficient autophagosome biogenesis, the assembly of ATG9-containing tubulovesicular clusters into phagophores/autophagosomes, and for the disassembly of PAS-associated ATG components. ATG8 delipidation by ATG4 also recycles ATG8-PE generated on inappropriate membranes to maintain a reservoir of unlipidated ATG8 that is required for autophagosome formation at the PAS. The sequence is that of Probable cysteine protease atg4 (atg4) from Aspergillus niger (strain ATCC MYA-4892 / CBS 513.88 / FGSC A1513).